A 792-amino-acid chain; its full sequence is Putative cellulose synthase-like protein H3 (792 aa).

2 helical membrane passes run 25 to 45 (AWML…VRRA) and 55 to 75 (VGGA…FVWL). The interval 132–154 (GRHVRDDGGPGARAAGGDGEQGA) is disordered. A compositionally biased stretch (gly residues) spans 140–151 (GPGARAAGGDGE). Residues D181 and D501 contribute to the active site. The next 6 helical transmembrane spans lie at 579-599 (VWAV…YCLL), 613-632 (FNIT…VEYM), 650-670 (IISA…TIGL), 706-726 (VFIP…IGTW), 739-759 (GPGI…LPFV), and 768-788 (YGIP…FLFC).

Belongs to the glycosyltransferase 2 family. Plant cellulose synthase-like H subfamily.

The protein resides in the golgi apparatus membrane. Functionally, thought to be a Golgi-localized beta-glycan synthase that polymerize the backbones of noncellulosic polysaccharides (hemicelluloses) of plant cell wall. The polypeptide is Putative cellulose synthase-like protein H3 (CSLH3) (Oryza sativa subsp. japonica (Rice)).